An 895-amino-acid polypeptide reads, in one-letter code: Androgen receptor (895 aa).

The modulating stretch occupies residues 1–533; that stretch reads MEVQLGLGRV…PIDYYFPPQK (533 aa). Residues 1–562 form an interaction with ZNF318 region; the sequence is MEVQLGLGRV…GSCKVFFKRA (562 aa). Disordered regions lie at residues 33 to 150 and 175 to 211; these read VIQN…LSLL and QLLQ…YLGG. Low complexity-rich tracts occupy residues 44-81 and 175-200; these read AASA…GSPQ and QLLQ…ASGA. Phosphoserine; by CDK9 is present on Ser-65. A Phosphoserine modification is found at Ser-79. Positions 201–211 are enriched in polar residues; sequence PTSSKDNYLGG. Position 208 is a phosphotyrosine; by CSK (Tyr-208). Ser-241 carries the phosphoserine modification. Tyr-252 carries the phosphotyrosine; by CSK and TNK2 modification. Residues Tyr-292, Tyr-331, Tyr-342, and Tyr-347 each carry the phosphotyrosine; by CSK modification. Tyr-348 is modified (phosphotyrosine; by CSK and TNK2). Residue Lys-371 forms a Glycyl lysine isopeptide (Lys-Gly) (interchain with G-Cter in SUMO) linkage. Tyr-378 is subject to Phosphotyrosine; by CSK. Lys-496 participates in a covalent cross-link: Glycyl lysine isopeptide (Lys-Gly) (interchain with G-Cter in SUMO). Phosphotyrosine; by CSK occurs at positions 510 and 527. The tract at residues 527–894 is interaction with LPXN; it reads YYFPPQKTCL…GKVKPIYFHT (368 aa). The nuclear receptor DNA-binding region spans 534-607; sequence TCLICGDEAS…AGMTLGARKL (74 aa). 2 consecutive NR C4-type zinc fingers follow at residues 535–555 and 571–595; these read CLIC…CGSC and CASR…LRKC. Positions 547 to 637 are interaction with HIPK3; that stretch reads YGALTCGSCK…TEETAQKLTV (91 aa). The interaction with CCAR1 stretch occupies residues 567–894; sequence QKYLCASRND…GKVKPIYFHT (328 aa). An interaction with KAT7 region spans residues 600–894; the sequence is MTLGARKLKK…GKVKPIYFHT (295 aa). Ser-626 carries the post-translational modification Phosphoserine; by STK4/MST1. One can recognise an NR LBD domain in the interval 644 to 875; it reads ECQPIFLNVL…DFPEMMAEII (232 aa). Positions 681 and 728 each coordinate 17beta-hydroxy-5alpha-androstan-3-one. Glycyl lysine isopeptide (Lys-Gly) (interchain with G-Cter in ubiquitin) cross-links involve residues Lys-821 and Lys-823. Thr-853 lines the 17beta-hydroxy-5alpha-androstan-3-one pocket. The residue at position 891 (Tyr-891) is a Phosphotyrosine; by CSK.

This sequence belongs to the nuclear hormone receptor family. NR3 subfamily. As to quaternary structure, binds DNA as a homodimer. Part of a ternary complex containing AR, EFCAB6/DJBP and PARK7. Interacts with HIPK3 and NR0B2 in the presence of androgen. The ligand binding domain interacts with KAT7/HBO1 in the presence of dihydrotestosterone. Interacts with EFCAB6/DJBP, PQBP1, RANBP9, RBAK, SPDEF, SRA1, TGFB1I1 and RREB1. Interacts with ZMIZ1/ZIMP10 and ZMIZ2/ZMIP7 which both enhance its transactivation activity. Interacts with SLC30A9 and RAD54L2/ARIP4. Interacts with MACROD1 (via macro domain). Interacts via the ligand-binding domain with LXXLL and FXXLF motifs from NCOA1, NCOA2, NCOA3 and MAGEA11. Interacts (via nuclear receptor DNA binding domain and nuclear receptor ligand binding domain) with NCOA4. The AR N-terminal poly-Gln region binds Ran resulting in enhancement of AR-mediated transactivation. Ran-binding decreases as the poly-Gln length increases. Interacts with HIP1 (via coiled coil domain). Interacts (via ligand-binding domain) with TRIM68. Interacts with TNK2. Interacts with USP26. Interacts with RNF6. Interacts (regulated by RNF6 probably through polyubiquitination) with RNF14; regulates AR transcriptional activity. Interacts with PRMT2 and TRIM24. Interacts with RACK1. Interacts with RANBP10; this interaction enhances dihydrotestosterone-induced AR transcriptional activity. Interacts with PRPF6 in a hormone-independent way; this interaction enhances dihydrotestosterone-induced AR transcriptional activity. Interacts with STK4/MST1. Interacts with ZIPK/DAPK3. Interacts with LPXN. Interacts with MAK. Part of a complex containing AR, MAK and NCOA3. Interacts with CRY1. Interacts with CCAR1 and GATA2. Interacts with ZNF318. Interacts with BUD31. Interacts with ARID4A. Interacts with ARID4B. Interacts (via NR LBD domain) with ZBTB7A; the interaction is direct and androgen-dependent. Interacts with NCOR1. Interacts with NCOR2. Interacts with CRY2 in a ligand-dependent manner. In terms of processing, phosphorylated in prostate cancer cells in response to several growth factors including EGF. Phosphorylation is induced by c-Src kinase (CSK). Tyr-510 is one of the major phosphorylation sites and an increase in phosphorylation and Src kinase activity is associated with prostate cancer progression. Phosphorylation by TNK2 enhances the DNA-binding and transcriptional activity. Phosphorylation at Ser-65 by CDK9 regulates AR promoter selectivity and cell growth. Post-translationally, sumoylated on Lys-371 (major) and Lys-496. Ubiquitinated. Deubiquitinated by USP26. 'Lys-6' and 'Lys-27'-linked polyubiquitination by RNF6 modulates AR transcriptional activity and specificity. Palmitoylated by ZDHHC7 and ZDHHC21. Palmitoylation is required for plasma membrane targeting and for rapid intracellular signaling via ERK and AKT kinases and cAMP generation.

The protein resides in the nucleus. The protein localises to the cytoplasm. Steroid hormone receptors are ligand-activated transcription factors that regulate eukaryotic gene expression and affect cellular proliferation and differentiation in target tissues. Transcription factor activity is modulated by bound coactivator and corepressor proteins like ZBTB7A that recruits NCOR1 and NCOR2 to the androgen response elements/ARE on target genes, negatively regulating androgen receptor signaling and androgen-induced cell proliferation. Transcription activation is also down-regulated by NR0B2. Activated, but not phosphorylated, by HIPK3 and ZIPK/DAPK3. This is Androgen receptor (AR) from Macaca fascicularis (Crab-eating macaque).